Reading from the N-terminus, the 109-residue chain is Staphostatin B (109 aa).

Residues 97-101 (IGTSR) are binds to staphopain B.

This sequence belongs to the protease inhibitor I57 (SspC) family. Forms a stable non-covalent complex with prematurely activated/folded SspB.

It localises to the cytoplasm. Specifically inhibits the cysteine protease staphopain B (SspB) by blocking the active site of the enzyme. Probably required to protect cytoplasmic proteins from being degraded by prematurely activated/folded prostaphopain B. Also involved in growth capacity, viability and bacterial morphology. The polypeptide is Staphostatin B (sspC) (Staphylococcus aureus (strain NCTC 8325 / PS 47)).